The sequence spans 300 residues: Free fatty acid receptor 1 (300 aa).

The Extracellular portion of the chain corresponds to 1–8 (MDLPPQLS). A helical transmembrane segment spans residues 9–31 (FALYVSAFALGFPLNLLAIRGAV). Residues 32–41 (SHAKLRLTPS) are Cytoplasmic-facing. A helical transmembrane segment spans residues 42-64 (LVYTLHLACSDLLLAITLPLKAV). The Extracellular portion of the chain corresponds to 65–79 (EALASGVWPLPLPFC). C79 and C170 are disulfide-bonded. Residues 80–101 (PVFALAHFAPLYAGGGFLAALS) form a helical membrane-spanning segment. Residues 102–121 (AGRYLGAAFPFGYQAIRRPC) lie on the Cytoplasmic side of the membrane. The chain crosses the membrane as a helical span at residues 122 to 142 (YSWGVCVAIWALVLCHLGLAL). The Extracellular portion of the chain corresponds to 143–178 (GLEAPRGWVDNTTSSLGINIPVNGSPVCLEAWDPDS). The N-linked (GlcNAc...) asparagine glycan is linked to N153. A helical membrane pass occupies residues 179-200 (ARPARLSFSILLFFLPLVITAF). Over 201–223 (CYVGCLRALVHSGLSHKRKLRAA) the chain is Cytoplasmic. Residues 224 to 248 (WVAGGALLTLLLCLGPYNASNVASF) traverse the membrane as a helical segment. The Extracellular portion of the chain corresponds to 249 to 256 (INPDLEGS). A helical transmembrane segment spans residues 257–279 (WRKLGLITGAWSVVLNPLVTGYL). Topologically, residues 280 to 300 (GTGPGQGTICVTRTPRGTIQK) are cytoplasmic.

Belongs to the G-protein coupled receptor 1 family. In terms of tissue distribution, expressed abundantly in pancreatic beta cells.

The protein resides in the cell membrane. In terms of biological role, G-protein coupled receptor for medium and long chain saturated and unsaturated fatty acids that plays an important role in glucose homeostasis. Fatty acid binding increases glucose-stimulated insulin secretion, and may also enhance the secretion of glucagon-like peptide 1 (GLP-1). May also play a role in bone homeostasis; receptor signaling activates pathways that inhibit osteoclast differentiation. Ligand binding leads to a conformation change that triggers signaling via G-proteins that activate phospholipase C, leading to an increase of the intracellular calcium concentration. Seems to act through a G(q) and G(i)-mediated pathway. Mediates the anti-inflammatory effects of omega-3 polyunsaturated fatty acids (PUFAs) via inhibition of NLRP3 inflammasome activation. The protein is Free fatty acid receptor 1 (Ffar1) of Rattus norvegicus (Rat).